We begin with the raw amino-acid sequence, 235 residues long: MATSGRLGFTVRSLLNLPEQDAKPRVRREQQTCVPQTAAWLESECSHYLSSDESGLETSPADSSQLASLRRESPGSDPEKRRKRRVLFSKAQTLELERRFRQQRYLSAPEREQLARLLRLTPTQVKIWFQNHRYKLKRGRAPGITEPSDMAASSDLHAAPGLLRRVVVPVLVHDRPPSNNGRGEGTSAVPQDKCSARLATACPVPGYTAFGPGSALGLFPAYQHLAPPALVSWNW.

The segment covering 51–67 (SDESGLETSPADSSQLA) has biased composition (polar residues). Positions 51-86 (SDESGLETSPADSSQLASLRRESPGSDPEKRRKRRV) are disordered. The span at 69 to 80 (LRRESPGSDPEK) shows a compositional bias: basic and acidic residues. A DNA-binding region (homeobox) is located at residues 81 to 140 (RRKRRVLFSKAQTLELERRFRQQRYLSAPEREQLARLLRLTPTQVKIWFQNHRYKLKRGR).

It belongs to the NK-2 homeobox family. As to expression, prominent expression in ventral brain and neural tube structures.

The protein resides in the nucleus. Its function is as follows. Possible role in the specification of a distinct subset of neurons. The protein is Homeobox protein Nkx-2.8 (Nkx2-8) of Mus musculus (Mouse).